Reading from the N-terminus, the 224-residue chain is Adenylate kinase (224 aa).

Gly-10–Thr-15 is a binding site for ATP. The NMP stretch occupies residues Ser-30–Ile-59. Residues Ser-31, Arg-36, Glu-57–Ile-59, Gly-83–Arg-86, and Gln-90 contribute to the AMP site. The tract at residues Gly-124 to Asp-161 is LID. Arg-125 contributes to the ATP binding site. Zn(2+)-binding residues include Cys-128 and Cys-131. Val-134–Tyr-135 is an ATP binding site. Positions 148 and 151 each coordinate Zn(2+). Residues Arg-158 and Arg-169 each coordinate AMP. Gly-197 lines the ATP pocket.

This sequence belongs to the adenylate kinase family. Monomer.

The protein localises to the cytoplasm. The catalysed reaction is AMP + ATP = 2 ADP. The protein operates within purine metabolism; AMP biosynthesis via salvage pathway; AMP from ADP: step 1/1. Functionally, catalyzes the reversible transfer of the terminal phosphate group between ATP and AMP. Plays an important role in cellular energy homeostasis and in adenine nucleotide metabolism. This Thermococcus onnurineus (strain NA1) protein is Adenylate kinase.